A 335-amino-acid chain; its full sequence is Phosphate acyltransferase (335 aa).

The protein belongs to the PlsX family. In terms of assembly, homodimer. Probably interacts with PlsY.

The protein localises to the cytoplasm. The enzyme catalyses a fatty acyl-[ACP] + phosphate = an acyl phosphate + holo-[ACP]. The protein operates within lipid metabolism; phospholipid metabolism. Catalyzes the reversible formation of acyl-phosphate (acyl-PO(4)) from acyl-[acyl-carrier-protein] (acyl-ACP). This enzyme utilizes acyl-ACP as fatty acyl donor, but not acyl-CoA. The chain is Phosphate acyltransferase from Streptococcus pyogenes serotype M6 (strain ATCC BAA-946 / MGAS10394).